The primary structure comprises 90 residues: Mitochondrial import inner membrane translocase subunit Tim10 (90 aa).

The Twin CX3C motif signature appears at 37-62 (CHSKCINKSYGDSDITKQEALCLDRC). Intrachain disulfides connect C37–C62 and C41–C58.

This sequence belongs to the small Tim family. Heterohexamer; composed of 3 copies of TIM9 and 3 copies of TIM10, named soluble 70 kDa complex. Associates directly with the TIM22 complex, whose core is composed of TIM22 and TIM54. Interacts with the transmembrane regions of multi-pass transmembrane proteins in transit.

The protein localises to the mitochondrion inner membrane. Its function is as follows. Mitochondrial intermembrane chaperone that participates in the import and insertion of multi-pass transmembrane proteins into the mitochondrial inner membrane. Also required for the transfer of beta-barrel precursors from the TOM complex to the sorting and assembly machinery (SAM complex) of the outer membrane. Acts as a chaperone-like protein that protects the hydrophobic precursors from aggregation and guide them through the mitochondrial intermembrane space. This chain is Mitochondrial import inner membrane translocase subunit Tim10 (TIM10), found in Pichia sorbitophila (strain ATCC MYA-4447 / BCRC 22081 / CBS 7064 / NBRC 10061 / NRRL Y-12695) (Hybrid yeast).